A 301-amino-acid polypeptide reads, in one-letter code: Small ribosomal subunit protein uS2 (301 aa).

Positions 237-301 (PTESWNDTVV…QDWSNSTSQW (65 aa)) are disordered. Over residues 264-278 (PQYAPAPQAAAAPVA) the composition is skewed to low complexity.

Belongs to the universal ribosomal protein uS2 family. Component of the small ribosomal subunit. Mature ribosomes consist of a small (40S) and a large (60S) subunit. The 40S subunit contains about 33 different proteins and 1 molecule of RNA (18S). The 60S subunit contains about 49 different proteins and 3 molecules of RNA (28S, 5.8S and 5S). Interacts with ribosomal protein S21.

The protein localises to the cytoplasm. Functionally, required for the assembly and/or stability of the 40S ribosomal subunit. Required for the processing of the 20S rRNA-precursor to mature 18S rRNA in a late step of the maturation of 40S ribosomal subunits. The polypeptide is Small ribosomal subunit protein uS2 (Diaphorina citri (Asian citrus psyllid)).